We begin with the raw amino-acid sequence, 271 residues long: Oligodendrocyte transcription factor 1 (271 aa).

The segment at Y38–R117 is disordered. Over residues S43–T61 the composition is skewed to low complexity. The region spanning Q105–L164 is the bHLH domain.

Expressed in the brain, in oligodendrocytes. Strongly expressed in oligodendrogliomas, while expression is weak to moderate in astrocytomas. Expression in glioblastomas is highly variable.

The protein localises to the nucleus. Promotes formation and maturation of oligodendrocytes, especially within the brain. Cooperates with OLIG2 to establish the pMN domain of the embryonic neural tube. The polypeptide is Oligodendrocyte transcription factor 1 (OLIG1) (Homo sapiens (Human)).